The following is a 928-amino-acid chain: Isoleucine--tRNA ligase (928 aa).

The short motif at 57-67 (PFANGNIHMGH) is the 'HIGH' region element. Glutamate 552 is a binding site for L-isoleucyl-5'-AMP. Residues 593 to 597 (KMSKS) carry the 'KMSKS' region motif. Lysine 596 provides a ligand contact to ATP. Zn(2+) contacts are provided by cysteine 887, cysteine 890, cysteine 907, and cysteine 910.

Belongs to the class-I aminoacyl-tRNA synthetase family. IleS type 1 subfamily. In terms of assembly, monomer. It depends on Zn(2+) as a cofactor.

It is found in the cytoplasm. It catalyses the reaction tRNA(Ile) + L-isoleucine + ATP = L-isoleucyl-tRNA(Ile) + AMP + diphosphate. Functionally, catalyzes the attachment of isoleucine to tRNA(Ile). As IleRS can inadvertently accommodate and process structurally similar amino acids such as valine, to avoid such errors it has two additional distinct tRNA(Ile)-dependent editing activities. One activity is designated as 'pretransfer' editing and involves the hydrolysis of activated Val-AMP. The other activity is designated 'posttransfer' editing and involves deacylation of mischarged Val-tRNA(Ile). This is Isoleucine--tRNA ligase from Lacticaseibacillus paracasei (strain ATCC 334 / BCRC 17002 / CCUG 31169 / CIP 107868 / KCTC 3260 / NRRL B-441) (Lactobacillus paracasei).